The chain runs to 494 residues: Histidine--tRNA ligase (494 aa).

The segment at 1–20 is disordered; sequence MAKDQKKQPRPKAETPKGFR.

This sequence belongs to the class-II aminoacyl-tRNA synthetase family. Homodimer.

It is found in the cytoplasm. The enzyme catalyses tRNA(His) + L-histidine + ATP = L-histidyl-tRNA(His) + AMP + diphosphate + H(+). This chain is Histidine--tRNA ligase, found in Paracoccus denitrificans (strain Pd 1222).